The following is an 808-amino-acid chain: Piwi-like protein 1 (808 aa).

Positions 214 to 333 (RINRVLNENN…IPGELCYLCG (120 aa)) constitute a PAZ domain. Residues 300-322 (SMVRPKEKTENEPEGPTETDQSL) form a disordered region. The 299-residue stretch at 492–790 (HMALVFIPDD…LAELVGKIHR (299 aa)) folds into the Piwi domain.

It belongs to the argonaute family. Piwi subfamily. In terms of tissue distribution, expressed in dividing adult somatic stem cells (neoblasts).

The polypeptide is Piwi-like protein 1 (wi-1) (Schmidtea mediterranea (Freshwater planarian flatworm)).